A 301-amino-acid chain; its full sequence is Phosphatidylglycerol--prolipoprotein diacylglyceryl transferase (301 aa).

4 helical membrane-spanning segments follow: residues 10–30 (IAFS…LAGF), 57–77 (LLFY…MLFY), 92–112 (VWEG…AVAW), and 119–139 (MHMF…LGFG). Position 140 (R140) interacts with a 1,2-diacyl-sn-glycero-3-phospho-(1'-sn-glycerol). Helical transmembrane passes span 202-222 (PSQL…LWLF), 230-250 (YAVS…VEFV), and 264-284 (LTRG…LFWL).

It belongs to the Lgt family.

It is found in the cell inner membrane. The catalysed reaction is L-cysteinyl-[prolipoprotein] + a 1,2-diacyl-sn-glycero-3-phospho-(1'-sn-glycerol) = an S-1,2-diacyl-sn-glyceryl-L-cysteinyl-[prolipoprotein] + sn-glycerol 1-phosphate + H(+). The protein operates within protein modification; lipoprotein biosynthesis (diacylglyceryl transfer). Catalyzes the transfer of the diacylglyceryl group from phosphatidylglycerol to the sulfhydryl group of the N-terminal cysteine of a prolipoprotein, the first step in the formation of mature lipoproteins. The sequence is that of Phosphatidylglycerol--prolipoprotein diacylglyceryl transferase from Xylella fastidiosa (strain M12).